Reading from the N-terminus, the 299-residue chain is Sulfate adenylyltransferase subunit 2 (299 aa).

The disordered stretch occupies residues 276–299; it reads EREGRVIDHDSAGSMEKKKREGYF.

It belongs to the PAPS reductase family. CysD subfamily. Heterodimer composed of CysD, the smaller subunit, and CysN.

It catalyses the reaction sulfate + ATP + H(+) = adenosine 5'-phosphosulfate + diphosphate. It participates in sulfur metabolism; hydrogen sulfide biosynthesis; sulfite from sulfate: step 1/3. In terms of biological role, with CysN forms the ATP sulfurylase (ATPS) that catalyzes the adenylation of sulfate producing adenosine 5'-phosphosulfate (APS) and diphosphate, the first enzymatic step in sulfur assimilation pathway. APS synthesis involves the formation of a high-energy phosphoric-sulfuric acid anhydride bond driven by GTP hydrolysis by CysN coupled to ATP hydrolysis by CysD. This chain is Sulfate adenylyltransferase subunit 2, found in Pseudoalteromonas translucida (strain TAC 125).